The primary structure comprises 502 residues: ATP synthase subunit alpha (502 aa).

Residue 169-176 (GDRQTGKT) participates in ATP binding.

This sequence belongs to the ATPase alpha/beta chains family. F-type ATPases have 2 components, CF(1) - the catalytic core - and CF(0) - the membrane proton channel. CF(1) has five subunits: alpha(3), beta(3), gamma(1), delta(1), epsilon(1). CF(0) has three main subunits: a(1), b(2) and c(9-12). The alpha and beta chains form an alternating ring which encloses part of the gamma chain. CF(1) is attached to CF(0) by a central stalk formed by the gamma and epsilon chains, while a peripheral stalk is formed by the delta and b chains.

It localises to the cell inner membrane. The enzyme catalyses ATP + H2O + 4 H(+)(in) = ADP + phosphate + 5 H(+)(out). Functionally, produces ATP from ADP in the presence of a proton gradient across the membrane. The alpha chain is a regulatory subunit. This is ATP synthase subunit alpha from Geobacter sp. (strain M21).